A 296-amino-acid chain; its full sequence is Myozenin-1 (296 aa).

Serine 82 carries the post-translational modification Phosphoserine. Composition is skewed to gly residues over residues 105 to 117 (FSYG…GQAG) and 134 to 170 (SGFG…QAGG). The interval 105–172 (FSYGKGSSGG…GSGDQAGGDG (68 aa)) is disordered.

Belongs to the myozenin family. As to quaternary structure, interacts with ACTN2, ACTN3, FLNA, FLNB, FLNC, LDB3, PPP3CA and TCAP. Interacts via its C-terminal region with MYOT. In terms of tissue distribution, expressed primarily in skeletal muscle and specifically enriched in the gastrocnemius, which is composed predominantly of fast-twitch muscle fibers. Detected at lower levels in heart.

The protein localises to the nucleus. It is found in the cell projection. The protein resides in the pseudopodium. Myozenins may serve as intracellular binding proteins involved in linking Z-disk proteins such as alpha-actinin, gamma-filamin, TCAP/telethonin, LDB3/ZASP and localizing calcineurin signaling to the sarcomere. Plays an important role in the modulation of calcineurin signaling. May play a role in myofibrillogenesis. In Mus musculus (Mouse), this protein is Myozenin-1.